Consider the following 339-residue polypeptide: Ketol-acid reductoisomerase (NADP(+)) (339 aa).

The 182-residue stretch at 1–182 (MRVYYDRDAD…GGGRAGIIET (182 aa)) folds into the KARI N-terminal Rossmann domain. NADP(+) contacts are provided by residues 24–27 (YGSQ), Arg48, Ser51, Ser53, and 83–86 (DELQ). His108 is an active-site residue. Gly134 contributes to the NADP(+) binding site. A KARI C-terminal knotted domain is found at 183–328 (TFKEECETDL…ERLRAMMPWI (146 aa)). Mg(2+) contacts are provided by Asp191, Glu195, Glu227, and Glu231. Residue Ser252 coordinates substrate.

It belongs to the ketol-acid reductoisomerase family. Requires Mg(2+) as cofactor.

It carries out the reaction (2R)-2,3-dihydroxy-3-methylbutanoate + NADP(+) = (2S)-2-acetolactate + NADPH + H(+). The catalysed reaction is (2R,3R)-2,3-dihydroxy-3-methylpentanoate + NADP(+) = (S)-2-ethyl-2-hydroxy-3-oxobutanoate + NADPH + H(+). The protein operates within amino-acid biosynthesis; L-isoleucine biosynthesis; L-isoleucine from 2-oxobutanoate: step 2/4. It participates in amino-acid biosynthesis; L-valine biosynthesis; L-valine from pyruvate: step 2/4. Functionally, involved in the biosynthesis of branched-chain amino acids (BCAA). Catalyzes an alkyl-migration followed by a ketol-acid reduction of (S)-2-acetolactate (S2AL) to yield (R)-2,3-dihydroxy-isovalerate. In the isomerase reaction, S2AL is rearranged via a Mg-dependent methyl migration to produce 3-hydroxy-3-methyl-2-ketobutyrate (HMKB). In the reductase reaction, this 2-ketoacid undergoes a metal-dependent reduction by NADPH to yield (R)-2,3-dihydroxy-isovalerate. The sequence is that of Ketol-acid reductoisomerase (NADP(+)) from Methylobacterium nodulans (strain LMG 21967 / CNCM I-2342 / ORS 2060).